The following is a 178-amino-acid chain: uncharacterized protein (178 aa).

This sequence belongs to the mycobacterial PPE family.

This is an uncharacterized protein from Mycobacterium tuberculosis (strain CDC 1551 / Oshkosh).